The primary structure comprises 539 residues: Carboxysome assembly protein CcmM (539 aa).

Residues 1-214 (MPSPTTVPVA…PLRPSSSEAT (214 aa)) form a carbonic anhydrase-like domain region. The segment at 194-213 (TADFHSTPTPSPLRPSSSEA) is disordered. One copy of the RbcS-like repeat 1, SSUL1 repeat lies at 226 to 397 (SSEVITQVRS…VLAELENCLS (172 aa)). 2 disulfides stabilise this stretch: Cys-261/Cys-279 and Cys-377/Cys-395. One copy of the RbcS-like repeat 2, SSUL2 repeat lies at 341–425 (LSAEVVNKVR…RVFEALIQDP (85 aa)). A disordered region spans residues 427–459 (GPVGSAKAAAAPVSSATPSSHSYTSNGSSSSDV). A compositionally biased stretch (low complexity) spans 431–457 (SAKAAAAPVSSATPSSHSYTSNGSSSS). One copy of the RbcS-like repeat 3, SSUL3 repeat lies at 453–539 (GSSSSDVAGQ…RVAELLIQKP (87 aa)).

It belongs to the gamma-class carbonic anhydrase family. Probably a homotrimer. Purifies from carboxysomes in complex with both RuBisCO subunits and carbonic anhydrase (ccaA); the complex is probably associated with the carboxysome shell. Interacts with CcmN. Binds holo-RuBisCO (RbcL(8)-RbcS(8)) via its SSUL domains; the SSUL domain binds close to the equitorial domain of RuBisCO between RbcL dimers, with 1 M35 protein per dimer. As to quaternary structure, the short form purifies from carboxysomes in complex with both RuBisCO subunits; the complex is probably associated with the carboxysome shell. Identified as 2 proteins of 58 and 38 kDa by mass spectrometry, called M58 and M35, the shorter protein is translated starting at Val-216. Protease inhibitors do not alter the appearance of M35. In isolated carboxysomes M35 is 4-5 fold more abundant. The first amino acid (equivalent to Val-216) is not seen in Edman degradation, while Tyr-219 and Gln-222 may be post-translationally modified.

It is found in the carboxysome. In terms of biological role, functions as a scaffold protein for the assembly of beta-carboxysomes, initiates carboxysome assembly by coalescing RuBisCO (ribulose bisphosphate carboxylase, rbcL-rbcS). Produced as a full-length (M58) and a shorter form (M35); both forms are required for correct carboxysome assembly and growth. The short form is more abundant. Despite its strong similarity to gamma-class carbonic anhydrase (CA) it does not have detectable CA activity. Its function is as follows. The M35 isoform is able to condense RuBisCO into a liquid matrix; the presence of disulfide bonds in M35 reduces affinity for RuBisCO, while mutating all 4 Cys to Ser causes a 4-fold increase in doubling time, more than 15% increase in CO(2) requirement, and abnormal carboxysomes. Beta-carboxysome assembly initiates when soluble RuBisCO is condensed into a liquid matrix in a pre-carboxysome by the RbcS-like domains of probably both CcmM58 and CcmM35. CcmN interacts with the N-terminus of CcmM58, and then recruits the CcmK2 major shell protein plus other less abundant CcmK proteins via CcmN's encapsulation peptide. Shell formation requires CcmK proteins and CcmO. CcmL caps the otherwise elongated carboxysome. Once fully encapsulated carboxysomes are formed, they migrate within the cell probably via interactions with the cytoskeleton. The protein is Carboxysome assembly protein CcmM of Synechococcus elongatus (strain ATCC 33912 / PCC 7942 / FACHB-805) (Anacystis nidulans R2).